Consider the following 273-residue polypeptide: Imidazole glycerol phosphate synthase subunit HisF (273 aa).

Catalysis depends on residues Asp-11 and Asp-134.

Belongs to the HisA/HisF family. Heterodimer of HisH and HisF.

Its subcellular location is the cytoplasm. The enzyme catalyses 5-[(5-phospho-1-deoxy-D-ribulos-1-ylimino)methylamino]-1-(5-phospho-beta-D-ribosyl)imidazole-4-carboxamide + L-glutamine = D-erythro-1-(imidazol-4-yl)glycerol 3-phosphate + 5-amino-1-(5-phospho-beta-D-ribosyl)imidazole-4-carboxamide + L-glutamate + H(+). Its pathway is amino-acid biosynthesis; L-histidine biosynthesis; L-histidine from 5-phospho-alpha-D-ribose 1-diphosphate: step 5/9. IGPS catalyzes the conversion of PRFAR and glutamine to IGP, AICAR and glutamate. The HisF subunit catalyzes the cyclization activity that produces IGP and AICAR from PRFAR using the ammonia provided by the HisH subunit. This chain is Imidazole glycerol phosphate synthase subunit HisF, found in Methanosarcina mazei (strain ATCC BAA-159 / DSM 3647 / Goe1 / Go1 / JCM 11833 / OCM 88) (Methanosarcina frisia).